The chain runs to 561 residues: Mercuric reductase (561 aa).

The 64-residue stretch at 2-65 (THLKITGMTC…AVAGLGYKAT (64 aa)) folds into the HMA domain. A metal cation is bound by residues cysteine 11 and cysteine 14. FAD-binding residues include alanine 110, glycine 130, and threonine 135. Residues cysteine 136 and cysteine 141 are joined by a disulfide bond. FAD is bound by residues lysine 145, alanine 211, aspartate 403, and valine 411. Hg(2+) contacts are provided by cysteine 558 and cysteine 559.

The protein belongs to the class-I pyridine nucleotide-disulfide oxidoreductase family. In terms of assembly, homodimer. FAD serves as cofactor.

It catalyses the reaction Hg + NADP(+) + H(+) = Hg(2+) + NADPH. Its function is as follows. Resistance to Hg(2+) in bacteria appears to be governed by a specialized system which includes mercuric reductase. MerA protein is responsible for volatilizing mercury as Hg(0). Plays a pivotal role in mercury resistance under thiol-depleted conditions and cell protection. Protects cells under thiol-depleted conditions. In Pseudomonas aeruginosa, this protein is Mercuric reductase (merA).